A 307-amino-acid polypeptide reads, in one-letter code: Dimethyladenosine transferase (307 aa).

The S-adenosyl-L-methionine site is built by His31, Leu33, Gly58, Glu79, Asp107, and Asn122.

This sequence belongs to the class I-like SAM-binding methyltransferase superfamily. rRNA adenine N(6)-methyltransferase family.

It catalyses the reaction adenosine(1779)/adenosine(1780) in 18S rRNA + 4 S-adenosyl-L-methionine = N(6)-dimethyladenosine(1779)/N(6)-dimethyladenosine(1780) in 18S rRNA + 4 S-adenosyl-L-homocysteine + 4 H(+). Its function is as follows. Specifically dimethylates two adjacent adenosines in the loop of a conserved hairpin near the 3'-end of 18S rRNA in the 40S particle. This Schizosaccharomyces pombe (strain 972 / ATCC 24843) (Fission yeast) protein is Dimethyladenosine transferase (dim1).